The chain runs to 541 residues: Amino-acid permease 2 (541 aa).

The segment covering 1–22 (MSFSPPNKSADATIQITEMTRQ) has biased composition (polar residues). Residues 1–43 (MSFSPPNKSADATIQITEMTRQGTPSSGEAAASTPSTSSTESG) are disordered. Residues 23–41 (GTPSSGEAAASTPSTSSTE) are compositionally biased toward low complexity. 12 helical membrane-spanning segments follow: residues 66 to 86 (FSFA…WIYG), 90 to 110 (GGAA…WALA), 139 to 159 (VPFL…AGGA), 188 to 208 (VVGV…LPTA), 214 to 234 (TSGY…TLLV), 255 to 275 (GWSP…WIMT), 301 to 321 (ATTF…VCMG), 347 to 367 (PAIF…IPGI), 399 to 419 (PLIA…LGLA), 424 to 444 (IGAV…IPII), 464 to 484 (VWVN…FFFP), and 496 to 516 (YAIV…YTHG).

This sequence belongs to the amino acid-polyamine-organocation (APC) superfamily.

It is found in the membrane. This Neurospora crassa (strain ATCC 24698 / 74-OR23-1A / CBS 708.71 / DSM 1257 / FGSC 987) protein is Amino-acid permease 2 (aap-2).